We begin with the raw amino-acid sequence, 310 residues long: Cytochrome f (310 aa).

Residues methionine 1–alanine 27 form the signal peptide. Tyrosine 28, cysteine 48, cysteine 51, and histidine 52 together coordinate heme. The helical transmembrane segment at isoleucine 277 to lysine 297 threads the bilayer.

The protein belongs to the cytochrome f family. The 4 large subunits of the cytochrome b6-f complex are cytochrome b6, subunit IV (17 kDa polypeptide, PetD), cytochrome f and the Rieske protein, while the 4 small subunits are PetG, PetL, PetM and PetN. The complex functions as a dimer. Requires heme as cofactor.

The protein localises to the cellular thylakoid membrane. Its function is as follows. Component of the cytochrome b6-f complex, which mediates electron transfer between photosystem II (PSII) and photosystem I (PSI), cyclic electron flow around PSI, and state transitions. This Synechococcus sp. (strain WH7803) protein is Cytochrome f.